Reading from the N-terminus, the 204-residue chain is Cytochrome b6 (204 aa).

The chain crosses the membrane as a helical span at residues 23–43 (YCLGGITLTSFLVQVATGSAM). Heme c is bound at residue Cys24. His75 and His89 together coordinate heme b. 3 helical membrane-spanning segments follow: residues 81 to 101 (MMVL…GFKK), 107 to 127 (WVTG…GYSL), and 136 to 157 (AVKI…LVEL). 2 residues coordinate heme b: His176 and His191. Residues 177–197 (TFILPLLTAVFMPMHFLMIRK) form a helical membrane-spanning segment.

This sequence belongs to the cytochrome b family. PetB subfamily. The 4 large subunits of the cytochrome b6-f complex are cytochrome b6, subunit IV (17 kDa polypeptide, PetD), cytochrome f and the Rieske protein, while the 4 small subunits are PetG, PetL, PetM and PetN. The complex functions as a dimer. It depends on heme b as a cofactor. Heme c is required as a cofactor.

The protein resides in the plastid. It localises to the chloroplast thylakoid membrane. In terms of biological role, component of the cytochrome b6-f complex, which mediates electron transfer between photosystem II (PSII) and photosystem I (PSI), cyclic electron flow around PSI, and state transitions. The polypeptide is Cytochrome b6 (Picea abies (Norway spruce)).